The sequence spans 224 residues: Inhibitor of apoptosis protein (224 aa).

The BIR repeat unit spans residues 29-92 (VDARNKSFAI…GFWSRNCGFM (64 aa)). Zn(2+)-binding residues include C62, C65, H82, and C89. The C4-type zinc-finger motif lies at 189–207 (CMTCGIEQINKDENFCSAC).

This sequence belongs to the asfivirus IAP family. As to quaternary structure, interacts with subunit p17 of host CASP3.

Its subcellular location is the host cytoplasm. The protein resides in the virion. In terms of biological role, prevents apoptosis of host cell by inhibiting caspase-3/CASP3 activation to promote the viral replication. Also induces the activation of host NF-kappaB. In Ornithodoros (relapsing fever ticks), this protein is Inhibitor of apoptosis protein.